The sequence spans 221 residues: Abscisic acid receptor PYL1 (221 aa).

The span at 1-11 (MANSESSSSPV) shows a compositional bias: low complexity. Positions 1–22 (MANSESSSSPVNEEENSQRIST) are disordered. Ala-2 carries the post-translational modification N-acetylalanine. The START-like stretch occupies residues 50 to 206 (YQLGNGRCSS…NLQKLASITE (157 aa)). Residues Lys-86, 116–121 (ANTSRE), 143–149 (RLRNYKS), and Glu-171 contribute to the abscisate site. Positions 112–116 (SGLPA) match the Gate loop motif. The Latch loop motif lies at 142 to 144 (HRL).

This sequence belongs to the PYR/PYL/RCAR abscisic acid intracellular receptor family. In terms of assembly, homodimer. Binds ABA on one subunit only. Interacts with HAB1, ABI1 and ABI2, and possibly with other PP2Cs. Binds to CARs protein in an ABA-independent manner, both at the plasma membrane and in the nucleus. Interacts directly with CAR1 and CAR4.

The protein resides in the cytoplasm. The protein localises to the nucleus. Its subcellular location is the cell membrane. Its function is as follows. Receptor for abscisic acid (ABA) required for ABA-mediated responses such as stomatal closure and germination inhibition. Inhibits the activity of group-A protein phosphatases type 2C (PP2Cs) when activated by ABA. Can be activated by both (-)-ABA and (+)-ABA. The protein is Abscisic acid receptor PYL1 (PYL1) of Arabidopsis thaliana (Mouse-ear cress).